The sequence spans 267 residues: Type III pantothenate kinase (267 aa).

6 to 13 (DVRNTHTT) is a binding site for ATP. 109–112 (GADR) contacts substrate. D111 serves as the catalytic Proton acceptor. Position 131 (D131) interacts with K(+). An ATP-binding site is contributed by S134. T186 contacts substrate.

It belongs to the type III pantothenate kinase family. Homodimer. NH4(+) is required as a cofactor. K(+) serves as cofactor.

The protein localises to the cytoplasm. It catalyses the reaction (R)-pantothenate + ATP = (R)-4'-phosphopantothenate + ADP + H(+). Its pathway is cofactor biosynthesis; coenzyme A biosynthesis; CoA from (R)-pantothenate: step 1/5. In terms of biological role, catalyzes the phosphorylation of pantothenate (Pan), the first step in CoA biosynthesis. This is Type III pantothenate kinase from Mycobacterium sp. (strain JLS).